Here is a 173-residue protein sequence, read N- to C-terminus: Crossover junction endodeoxyribonuclease RuvC (173 aa).

Active-site residues include aspartate 8, glutamate 67, and aspartate 139. Mg(2+) is bound by residues aspartate 8, glutamate 67, and aspartate 139.

This sequence belongs to the RuvC family. Homodimer which binds Holliday junction (HJ) DNA. The HJ becomes 2-fold symmetrical on binding to RuvC with unstacked arms; it has a different conformation from HJ DNA in complex with RuvA. In the full resolvosome a probable DNA-RuvA(4)-RuvB(12)-RuvC(2) complex forms which resolves the HJ. It depends on Mg(2+) as a cofactor.

The protein localises to the cytoplasm. It carries out the reaction Endonucleolytic cleavage at a junction such as a reciprocal single-stranded crossover between two homologous DNA duplexes (Holliday junction).. The RuvA-RuvB-RuvC complex processes Holliday junction (HJ) DNA during genetic recombination and DNA repair. Endonuclease that resolves HJ intermediates. Cleaves cruciform DNA by making single-stranded nicks across the HJ at symmetrical positions within the homologous arms, yielding a 5'-phosphate and a 3'-hydroxyl group; requires a central core of homology in the junction. The consensus cleavage sequence is 5'-(A/T)TT(C/G)-3'. Cleavage occurs on the 3'-side of the TT dinucleotide at the point of strand exchange. HJ branch migration catalyzed by RuvA-RuvB allows RuvC to scan DNA until it finds its consensus sequence, where it cleaves and resolves the cruciform DNA. The protein is Crossover junction endodeoxyribonuclease RuvC of Aliivibrio fischeri (strain ATCC 700601 / ES114) (Vibrio fischeri).